The chain runs to 269 residues: [LysW]-aminoadipate kinase (269 aa).

5-8 (KVGG) lines the ATP pocket. Arginine 64 serves as a coordination point for substrate. Tyrosine 78 lines the ATP pocket. Substrate is bound at residue asparagine 168.

Belongs to the acetylglutamate kinase family. LysZ subfamily.

The protein resides in the cytoplasm. The catalysed reaction is [amino-group carrier protein]-C-terminal-N-(1,4-dicarboxybutan-1-yl)-L-glutamine + ATP = [amino-group carrier protein]-C-terminal-N-(1-carboxy-5-phosphooxy-5-oxopentan-1-yl)-L-glutamine + ADP. It participates in amino-acid biosynthesis; L-lysine biosynthesis via AAA pathway; L-lysine from L-alpha-aminoadipate (Thermus route): step 2/5. Catalyzes the phosphorylation of LysW-gamma-alpha-aminoadipate. Does not phosphorylate N-acetyl-glutamate. The sequence is that of [LysW]-aminoadipate kinase from Thermus thermophilus (strain ATCC BAA-163 / DSM 7039 / HB27).